Here is a 141-residue protein sequence, read N- to C-terminus: uncharacterized protein (141 aa).

The disordered stretch occupies residues 1-61 (IRLLHSLTPP…PPPPPPPRRA (61 aa)). Over residues 8–58 (TPPPPPPPPPPPPPPPPPPPPPPPPPPPPPPPPPPPPPPPPPPPPPPPPPP) the composition is skewed to pro residues. A DNA-binding region (H-T-H motif) is located at residues 98–116 (KRLLVAYPVRHFLSAACQF).

This is an uncharacterized protein from Owenia fusiformis (Polychaete worm).